A 279-amino-acid chain; its full sequence is MALSQKEQDIQMMLAAQCHLGTKNCHYQMERYMYRRRQDGIYIINLEKTYEKLQMAARIIVAIENPQDICVLSARPYGQRAVFKFAQYLGCKSMAGRHTPGTFTNQIQKAFEEPRLLILTDPRTDHQPVKESSYMNIPTIAFCDTDSPLTHVDVAIPANNKGKHSIGVLYFLLARMVLEMRDQINVTNPWSVPVDLFFYREPEEAKEAGEEETFEAEGYALPAPVGAAENWGEAAAPAPEAAGYDGAAAAGGFEAAAGFEAAAPPVAGYVAPEAFGGAF.

The protein belongs to the universal ribosomal protein uS2 family. As to quaternary structure, component of the small ribosomal subunit. Mature ribosomes consist of a small (40S) and a large (60S) subunit. The 40S subunit contains about 33 different proteins and 1 molecule of RNA (18S). The 60S subunit contains about 49 different proteins and 3 molecules of RNA (25S, 5.8S and 5S). Interacts with ribosomal protein S21.

The protein resides in the cytoplasm. Required for the assembly and/or stability of the 40S ribosomal subunit. Required for the processing of the 20S rRNA-precursor to mature 18S rRNA in a late step of the maturation of 40S ribosomal subunits. This chain is Small ribosomal subunit protein uS2, found in Chlamydomonas reinhardtii (Chlamydomonas smithii).